The following is a 226-amino-acid chain: Phosphoribosylformylglycinamidine synthase subunit PurQ (226 aa).

Residues 2 to 226 (KIAVVVFPGS…LENGRIKVEA (225 aa)) enclose the Glutamine amidotransferase type-1 domain. The Nucleophile role is filled by Cys-86. Catalysis depends on residues His-195 and Glu-197.

As to quaternary structure, part of the FGAM synthase complex composed of 1 PurL, 1 PurQ and 2 PurS subunits.

It localises to the cytoplasm. It carries out the reaction N(2)-formyl-N(1)-(5-phospho-beta-D-ribosyl)glycinamide + L-glutamine + ATP + H2O = 2-formamido-N(1)-(5-O-phospho-beta-D-ribosyl)acetamidine + L-glutamate + ADP + phosphate + H(+). The catalysed reaction is L-glutamine + H2O = L-glutamate + NH4(+). It functions in the pathway purine metabolism; IMP biosynthesis via de novo pathway; 5-amino-1-(5-phospho-D-ribosyl)imidazole from N(2)-formyl-N(1)-(5-phospho-D-ribosyl)glycinamide: step 1/2. Functionally, part of the phosphoribosylformylglycinamidine synthase complex involved in the purines biosynthetic pathway. Catalyzes the ATP-dependent conversion of formylglycinamide ribonucleotide (FGAR) and glutamine to yield formylglycinamidine ribonucleotide (FGAM) and glutamate. The FGAM synthase complex is composed of three subunits. PurQ produces an ammonia molecule by converting glutamine to glutamate. PurL transfers the ammonia molecule to FGAR to form FGAM in an ATP-dependent manner. PurS interacts with PurQ and PurL and is thought to assist in the transfer of the ammonia molecule from PurQ to PurL. The sequence is that of Phosphoribosylformylglycinamidine synthase subunit PurQ from Limosilactobacillus reuteri (strain DSM 20016) (Lactobacillus reuteri).